The sequence spans 81 residues: MQVYVYKSRRKPDTYIYLARKDDFEVIPAPLKQVFGTPEFTLEFELTPERTLAQEDPESVLASLRERGFHLQMPPQNERPL.

Residues 1 to 81 (MQVYVYKSRR…QMPPQNERPL (81 aa)) enclose the YcgL domain.

This is YcgL domain-containing protein Tgr7_3126 from Thioalkalivibrio sulfidiphilus (strain HL-EbGR7).